The following is a 364-amino-acid chain: Fructose-bisphosphate aldolase B (364 aa).

A2 bears the N-acetylalanine mark. The residue at position 13 (K13) is an N6-succinyllysine. S36 carries the phosphoserine modification. T39 is subject to Phosphothreonine. R43 provides a ligand contact to beta-D-fructose 1,6-bisphosphate. Phosphoserine is present on S89. T119 bears the Phosphothreonine mark. Residue K121 is modified to N6-succinyllysine. S132 is subject to Phosphoserine. The active-site Proton acceptor is the E188. K230 functions as the Schiff-base intermediate with dihydroxyacetone-P in the catalytic mechanism. Phosphoserine occurs at positions 272, 276, 299, and 301. A beta-D-fructose 1,6-bisphosphate-binding site is contributed by 272-274 (SGG). A beta-D-fructose 1,6-bisphosphate-binding site is contributed by R304. S309 bears the Phosphoserine mark. Position 317 is an N6-succinyllysine (K317).

Belongs to the class I fructose-bisphosphate aldolase family. Homotetramer. Interacts with BBS1, BBS2, BBS4 and BBS7. Forms a ternary complex with G6PD and TP53; this interaction is direct.

It localises to the cytoplasm. Its subcellular location is the cytosol. The protein localises to the cytoskeleton. The protein resides in the microtubule organizing center. It is found in the centrosome. It localises to the centriolar satellite. The enzyme catalyses beta-D-fructose 1,6-bisphosphate = D-glyceraldehyde 3-phosphate + dihydroxyacetone phosphate. It carries out the reaction beta-D-fructose 1-phosphate = D-glyceraldehyde + dihydroxyacetone phosphate. It participates in carbohydrate degradation; glycolysis; D-glyceraldehyde 3-phosphate and glycerone phosphate from D-glucose: step 4/4. The protein operates within carbohydrate biosynthesis; gluconeogenesis. It functions in the pathway carbohydrate metabolism; fructose metabolism. Catalyzes the aldol cleavage of fructose 1,6-biphosphate to form two triosephosphates dihydroxyacetone phosphate and D-glyceraldehyde 3-phosphate in glycolysis as well as the reverse stereospecific aldol addition reaction in gluconeogenesis. In fructolysis, metabolizes fructose 1-phosphate derived from the phosphorylation of dietary fructose by fructokinase into dihydroxyacetone phosphate and D-glyceraldehyde. Acts as an adapter independently of its enzymatic activity, exerts a tumor suppressor role by stabilizing the ternary complex with G6PD and TP53 to inhibit G6PD activity and keep oxidative pentose phosphate metabolism in check. The sequence is that of Fructose-bisphosphate aldolase B (ALDOB) from Pongo abelii (Sumatran orangutan).